Reading from the N-terminus, the 157-residue chain is Ribosome-binding factor A (157 aa).

A disordered region spans residues 127 to 157 (QQQFGSEDASVEDEVLGDDVADDADETEGKD). Positions 135–157 (ASVEDEVLGDDVADDADETEGKD) are enriched in acidic residues.

The protein belongs to the RbfA family. As to quaternary structure, monomer. Binds 30S ribosomal subunits, but not 50S ribosomal subunits or 70S ribosomes.

The protein localises to the cytoplasm. Functionally, one of several proteins that assist in the late maturation steps of the functional core of the 30S ribosomal subunit. Associates with free 30S ribosomal subunits (but not with 30S subunits that are part of 70S ribosomes or polysomes). Required for efficient processing of 16S rRNA. May interact with the 5'-terminal helix region of 16S rRNA. The polypeptide is Ribosome-binding factor A (Shewanella baltica (strain OS155 / ATCC BAA-1091)).